The sequence spans 309 residues: Sulfate adenylyltransferase subunit 2 (309 aa).

This sequence belongs to the PAPS reductase family. CysD subfamily. Heterodimer composed of CysD, the smaller subunit, and CysN.

It carries out the reaction sulfate + ATP + H(+) = adenosine 5'-phosphosulfate + diphosphate. It functions in the pathway sulfur metabolism; hydrogen sulfide biosynthesis; sulfite from sulfate: step 1/3. In terms of biological role, with CysN forms the ATP sulfurylase (ATPS) that catalyzes the adenylation of sulfate producing adenosine 5'-phosphosulfate (APS) and diphosphate, the first enzymatic step in sulfur assimilation pathway. APS synthesis involves the formation of a high-energy phosphoric-sulfuric acid anhydride bond driven by GTP hydrolysis by CysN coupled to ATP hydrolysis by CysD. The sequence is that of Sulfate adenylyltransferase subunit 2 from Methylorubrum extorquens (strain CM4 / NCIMB 13688) (Methylobacterium extorquens).